A 213-amino-acid chain; its full sequence is MSHDTYELKAEAREQVGKGSARAVRRNGKVPAVIYGDKQPPLAIALTYKDIYYKIHGGGFLTTIATIDVDGKKIQVLPKDFQLDPVKDFPVHVDFLRIGKDTEVNVDVPVHFINEDKSPGIKRGGVLNIVRHEVEFHCPANAIPEFITIDLTGTNIGDSIHISAVQLPAGVKPVISDRDFTIATIAGSSAMKPEAEETVEVAAPEAAPVAEEK.

The protein belongs to the bacterial ribosomal protein bL25 family. CTC subfamily. In terms of assembly, part of the 50S ribosomal subunit; part of the 5S rRNA/L5/L18/L25 subcomplex. Contacts the 5S rRNA. Binds to the 5S rRNA independently of L5 and L18.

This is one of the proteins that binds to the 5S RNA in the ribosome where it forms part of the central protuberance. The chain is Large ribosomal subunit protein bL25 from Mesorhizobium japonicum (strain LMG 29417 / CECT 9101 / MAFF 303099) (Mesorhizobium loti (strain MAFF 303099)).